Reading from the N-terminus, the 76-residue chain is Conotoxin VnMSGL-0112 (76 aa).

The N-terminal stretch at 1-20 is a signal peptide; the sequence is MSGLGIMVLTLLLLVSMATS. A propeptide spanning residues 21-45 is cleaved from the precursor; that stretch reads HQDGRGKQATQRDAINVRRRRSITR. 3 cysteine pairs are disulfide-bonded: cysteine 49-cysteine 61, cysteine 53-cysteine 70, and cysteine 60-cysteine 74.

The protein belongs to the conotoxin O3 superfamily. In terms of tissue distribution, expressed by the venom duct.

It localises to the secreted. The polypeptide is Conotoxin VnMSGL-0112 (Conus ventricosus (Mediterranean cone)).